The sequence spans 302 residues: Lipoyl synthase (302 aa).

Positions 54, 59, 65, 80, 84, 87, and 291 each coordinate [4Fe-4S] cluster. Residues 66–280 (WSRKTATYML…RIYGKSIGFK (215 aa)) enclose the Radical SAM core domain.

Belongs to the radical SAM superfamily. Lipoyl synthase family. Requires [4Fe-4S] cluster as cofactor.

It localises to the cytoplasm. It carries out the reaction [[Fe-S] cluster scaffold protein carrying a second [4Fe-4S](2+) cluster] + N(6)-octanoyl-L-lysyl-[protein] + 2 oxidized [2Fe-2S]-[ferredoxin] + 2 S-adenosyl-L-methionine + 4 H(+) = [[Fe-S] cluster scaffold protein] + N(6)-[(R)-dihydrolipoyl]-L-lysyl-[protein] + 4 Fe(3+) + 2 hydrogen sulfide + 2 5'-deoxyadenosine + 2 L-methionine + 2 reduced [2Fe-2S]-[ferredoxin]. It functions in the pathway protein modification; protein lipoylation via endogenous pathway; protein N(6)-(lipoyl)lysine from octanoyl-[acyl-carrier-protein]: step 2/2. Functionally, catalyzes the radical-mediated insertion of two sulfur atoms into the C-6 and C-8 positions of the octanoyl moiety bound to the lipoyl domains of lipoate-dependent enzymes, thereby converting the octanoylated domains into lipoylated derivatives. The sequence is that of Lipoyl synthase from Leptospira borgpetersenii serovar Hardjo-bovis (strain JB197).